The primary structure comprises 1370 residues: DNA-directed RNA polymerase subunit beta (1370 aa).

The protein belongs to the RNA polymerase beta chain family. In terms of assembly, the RNAP catalytic core consists of 2 alpha, 1 beta, 1 beta' and 1 omega subunit. When a sigma factor is associated with the core the holoenzyme is formed, which can initiate transcription.

The enzyme catalyses RNA(n) + a ribonucleoside 5'-triphosphate = RNA(n+1) + diphosphate. DNA-dependent RNA polymerase catalyzes the transcription of DNA into RNA using the four ribonucleoside triphosphates as substrates. This Bordetella bronchiseptica (strain ATCC BAA-588 / NCTC 13252 / RB50) (Alcaligenes bronchisepticus) protein is DNA-directed RNA polymerase subunit beta.